Here is a 318-residue protein sequence, read N- to C-terminus: Cell growth regulator with EF hand domain protein 1 (318 aa).

Positions 1-19 are cleaved as a signal peptide; sequence MLPLTMTVLILLLLPTGQA. 2 EF-hand domains span residues 69-104 and 114-149; these read SREQ…ALAP and PVIL…ALRH. Positions 82, 84, 86, 88, 93, 127, 129, 131, and 138 each coordinate Ca(2+). The tract at residues 177-318 is disordered; it reads LRQETQEAPG…HIVQVENDEI (142 aa). Composition is skewed to basic and acidic residues over residues 186–202 and 223–233; these read GPRE…RESL and GEAEGQAEAKG. 3 repeat units span residues 219–235, 236–252, and 253–269. Residues 219 to 286 form a 4 X 17 AA approximate tandem repeats of P-G-P-R-G-E-A-G-G-Q-A-E-A-[KR]-G-D-A region; the sequence is PGPRGEAEGQ…GGQAEARENG (68 aa). Residues 235-272 show a composition bias toward low complexity; that stretch reads APGPRGEAGGQAEAEGDAPGPRGEAGGQAEAEGDAPGP. One copy of the 4; approximate repeat lies at 270–286; that stretch reads PGPRGEAGGQAEARENG. The segment covering 281–293 has biased composition (basic and acidic residues); it reads EARENGEEAKELP.

Post-translationally, probably digested extracellularly by an unknown serine protease generating extremely hydrophobic bioactive peptides.

It is found in the secreted. Functionally, mediates cell-cell adhesion in a calcium-dependent manner. Able to inhibit growth in several cell lines. The polypeptide is Cell growth regulator with EF hand domain protein 1 (Homo sapiens (Human)).